The following is a 740-amino-acid chain: NAD(P)H-quinone oxidoreductase subunit 5, chloroplastic (740 aa).

The next 16 helical transmembrane spans lie at 9 to 29 (WIIP…LILF), 40 to 60 (WAFQ…YLSI), 89 to 109 (IDPL…MVLI), 125 to 145 (FAYM…SNLI), 147 to 167 (IYIF…FWFT), 185 to 205 (GDFG…SFEF), 219 to 239 (NEVN…GAVS), 258 to 278 (TPIS…FLVA), 286 to 306 (VIPY…LLGA), 327 to 347 (LGYM…FHLI), 354 to 374 (ALLF…VGYS), 396 to 416 (ITFL…CFWS), 425 to 445 (WLYS…TAFY), 543 to 563 (LFPI…GIPF), 602 to 622 (VVSV…YKPV), and 717 to 737 (SYLF…YLLF).

Belongs to the complex I subunit 5 family. In terms of assembly, NDH is composed of at least 16 different subunits, 5 of which are encoded in the nucleus.

The protein localises to the plastid. The protein resides in the chloroplast thylakoid membrane. It catalyses the reaction a plastoquinone + NADH + (n+1) H(+)(in) = a plastoquinol + NAD(+) + n H(+)(out). It carries out the reaction a plastoquinone + NADPH + (n+1) H(+)(in) = a plastoquinol + NADP(+) + n H(+)(out). NDH shuttles electrons from NAD(P)H:plastoquinone, via FMN and iron-sulfur (Fe-S) centers, to quinones in the photosynthetic chain and possibly in a chloroplast respiratory chain. The immediate electron acceptor for the enzyme in this species is believed to be plastoquinone. Couples the redox reaction to proton translocation, and thus conserves the redox energy in a proton gradient. This Solanum bulbocastanum (Wild potato) protein is NAD(P)H-quinone oxidoreductase subunit 5, chloroplastic (ndhF).